Here is a 362-residue protein sequence, read N- to C-terminus: Cell death regulator Aven (362 aa).

3 disordered regions span residues 1–111 (MQAE…NYSK), 214–237 (VKPK…GPGG), and 253–362 (VLLG…SMIS). Positions 8 to 17 (RGGRGRRPGR) are enriched in basic residues. A compositionally biased stretch (gly residues) spans 37 to 47 (RGGGGGGGGDG). Over residues 50-60 (RRGRGRGRGFR) the composition is skewed to basic residues. Over residues 61–72 (GARGGRGGGGAP) the composition is skewed to gly residues. Over residues 90 to 105 (VEDDSDAETYGEENDE) the composition is skewed to acidic residues. Residue serine 94 is modified to Phosphoserine. Lysine 230 is subject to N6-methyllysine. Residues 350–362 (EEELEDWLDSMIS) show a composition bias toward acidic residues.

Binds Apaf-1, BCL-2 and BAD (Bcl-xl). In terms of tissue distribution, highly expressed in testis, ovary, thymus, prostate, spleen, small intestine, colon, heart, skeletal muscle, liver, kidney and pancreas.

The protein resides in the endomembrane system. In terms of biological role, protects against apoptosis mediated by Apaf-1. In Homo sapiens (Human), this protein is Cell death regulator Aven (AVEN).